The following is a 360-amino-acid chain: Phospho-N-acetylmuramoyl-pentapeptide-transferase (360 aa).

10 helical membrane-spanning segments follow: residues 18 to 38 (VFSYVTFRAILGLLTALVFSL), 73 to 93 (TMGGLLILAGIFVSVLLWGDL), 97 to 117 (YVLVMLFVLGSFGTIGFIDDY), 134 to 154 (YILQSLAALVVAVFLYSSSTL), 168 to 188 (VMPQLGLVFIVLAYFTIVGAS), 199 to 219 (GLAIMPTVMVAGAFALIAYLS), 236 to 256 (AGELVIVCTAIVGAGLGFLWF), 263 to 283 (VFMGDVGSLALGAALGAIAVL), 288 to 308 (ILLVIMGGVFVMETVSVILQV), and 338 to 358 (VIVRFWIISLFLVLLGLATLK).

It belongs to the glycosyltransferase 4 family. MraY subfamily. Mg(2+) serves as cofactor.

The protein resides in the cell inner membrane. It catalyses the reaction UDP-N-acetyl-alpha-D-muramoyl-L-alanyl-gamma-D-glutamyl-meso-2,6-diaminopimeloyl-D-alanyl-D-alanine + di-trans,octa-cis-undecaprenyl phosphate = di-trans,octa-cis-undecaprenyl diphospho-N-acetyl-alpha-D-muramoyl-L-alanyl-D-glutamyl-meso-2,6-diaminopimeloyl-D-alanyl-D-alanine + UMP. The protein operates within cell wall biogenesis; peptidoglycan biosynthesis. Its function is as follows. Catalyzes the initial step of the lipid cycle reactions in the biosynthesis of the cell wall peptidoglycan: transfers peptidoglycan precursor phospho-MurNAc-pentapeptide from UDP-MurNAc-pentapeptide onto the lipid carrier undecaprenyl phosphate, yielding undecaprenyl-pyrophosphoryl-MurNAc-pentapeptide, known as lipid I. This chain is Phospho-N-acetylmuramoyl-pentapeptide-transferase, found in Shewanella denitrificans (strain OS217 / ATCC BAA-1090 / DSM 15013).